We begin with the raw amino-acid sequence, 1264 residues long: ATP-dependent helicase/nuclease subunit A (1264 aa).

Positions 12-482 constitute a UvrD-like helicase ATP-binding domain; that stretch reads EQFTDSQWQA…IILAENFRSR (471 aa). 33-40 serves as a coordination point for ATP; it reads ASAGSGKT. The 289-residue stretch at 520–808 folds into the UvrD-like helicase C-terminal domain; sequence SEAADYSTEL…RVMTIHASKG (289 aa).

It belongs to the helicase family. AddA subfamily. As to quaternary structure, heterodimer of AddA and AddB/RexB. The cofactor is Mg(2+).

The catalysed reaction is Couples ATP hydrolysis with the unwinding of duplex DNA by translocating in the 3'-5' direction.. The enzyme catalyses ATP + H2O = ADP + phosphate + H(+). Its function is as follows. The heterodimer acts as both an ATP-dependent DNA helicase and an ATP-dependent, dual-direction single-stranded exonuclease. Recognizes the chi site generating a DNA molecule suitable for the initiation of homologous recombination. The AddA nuclease domain is required for chi fragment generation; this subunit has the helicase and 3' -&gt; 5' nuclease activities. The sequence is that of ATP-dependent helicase/nuclease subunit A from Enterococcus faecalis (strain ATCC 700802 / V583).